Consider the following 242-residue polypeptide: Small ribosomal subunit protein uS2 (242 aa).

This sequence belongs to the universal ribosomal protein uS2 family.

This chain is Small ribosomal subunit protein uS2, found in Colwellia psychrerythraea (strain 34H / ATCC BAA-681) (Vibrio psychroerythus).